A 276-amino-acid chain; its full sequence is MRQLQKQIIEDLKVIPTIDPQVEVRRRIDFLKDYLKQTKMATLVLGISGGQDSALAGRLAQLAVEELRKESGSEDYQFIAVRLPYGEQADESDAMMAIDDFIHPDRVVKVNIKPATDAMVMTLEAAGTKISDFNKGNIKARERMIVQYAIAGEYHGAVVGTDHAAEAVTGFYTKYGDGGADVTPLSQLDKRQGRALLEYLGAPEKLYQKTPTADLEEDRPALPDEQALGVTYKDIDDFLEGREVDQAAAEKIEAWYQRTGHKRHMPVAPLDTWWKD.

46-53 (GISGGQDS) is a binding site for ATP. Residue Asp-52 coordinates Mg(2+). Residue Arg-141 coordinates deamido-NAD(+). ATP is bound at residue Thr-161. Mg(2+) is bound at residue Glu-166. Lys-174 and Asp-181 together coordinate deamido-NAD(+). Residues Lys-190 and Thr-212 each contribute to the ATP site. 261 to 262 (HK) contributes to the deamido-NAD(+) binding site.

It belongs to the NAD synthetase family. In terms of assembly, homodimer.

The catalysed reaction is deamido-NAD(+) + NH4(+) + ATP = AMP + diphosphate + NAD(+) + H(+). The protein operates within cofactor biosynthesis; NAD(+) biosynthesis; NAD(+) from deamido-NAD(+) (ammonia route): step 1/1. Its function is as follows. Catalyzes the ATP-dependent amidation of deamido-NAD to form NAD. Uses ammonia as a nitrogen source. The polypeptide is NH(3)-dependent NAD(+) synthetase (Limosilactobacillus fermentum (strain NBRC 3956 / LMG 18251) (Lactobacillus fermentum)).